A 27-amino-acid polypeptide reads, in one-letter code: Cupiennin-3a (27 aa).

Residue E27 is modified to Glutamic acid 1-amide.

In terms of tissue distribution, expressed by the venom gland.

It is found in the secreted. The protein is Cupiennin-3a of Cupiennius salei (American wandering spider).